A 1006-amino-acid chain; its full sequence is Unconventional myosin-Id (1006 aa).

Alanine 2 is modified (N-acetylalanine). The Myosin motor domain occupies phenylalanine 9 to alanine 695. Glycine 102–threonine 109 provides a ligand contact to ATP. A Phosphoserine modification is found at serine 200. Phosphotyrosine is present on tyrosine 536. Residues methionine 572–aspartate 594 form an actin-binding region. 2 IQ domains span residues isoleucine 699–lysine 719 and threonine 721–histidine 741. One can recognise a TH1 domain in the interval glycine 812–glycine 1005.

It belongs to the TRAFAC class myosin-kinesin ATPase superfamily. Myosin family. As to quaternary structure, interacts (via the two IQ motifs) with calmodulin. Binds an additional calmodulin chain via a third, C-terminal region. Interacts with F-actin. As to expression, expressed in many tissues. Highest levels in brain, followed by lung and ovary; expression is lowest in spleen.

The protein resides in the cytoplasm. It localises to the perikaryon. It is found in the cell projection. The protein localises to the dendrite. Its subcellular location is the early endosome. The protein resides in the cell cortex. Unconventional myosin that functions as actin-based motor protein with ATPase activity. Plays a role in endosomal protein trafficking, and especially in the transfer of cargo proteins from early to recycling endosomes. Required for normal planar cell polarity in ciliated tracheal cells, for normal rotational polarity of cilia, and for coordinated, unidirectional ciliary movement in the trachea. Required for normal, polarized cilia organization in brain ependymal epithelial cells. This chain is Unconventional myosin-Id (MYO1D), found in Homo sapiens (Human).